A 356-amino-acid chain; its full sequence is Deoxyribonuclease-2-beta (356 aa).

A signal peptide spans 1–22 (MTAQPLKAALPLLFVALSGVLG). 4 N-linked (GlcNAc...) asparagine glycosylation sites follow: Asn-77, Asn-98, Asn-114, and Asn-273.

This sequence belongs to the DNase II family. As to expression, liver specific.

The protein localises to the lysosome. It carries out the reaction Endonucleolytic cleavage to nucleoside 3'-phosphates and 3'-phosphooligonucleotide end-products.. Its function is as follows. Hydrolyzes DNA under acidic conditions. Does not require divalent cations for activity. Participates in the degradation of nuclear DNA during lens cell differentiation. The polypeptide is Deoxyribonuclease-2-beta (Dnase2b) (Rattus norvegicus (Rat)).